Here is a 232-residue protein sequence, read N- to C-terminus: N-acetyltransferase 8B (232 aa).

Topologically, residues 1-62 (MPRFEAQKSS…FLLLLGVPLA (62 aa)) are cytoplasmic. Residues 63–83 (LVLVSGSWILAVICIFFLLLL) traverse the membrane as a helical; Signal-anchor for type II membrane protein segment. Residues 79-224 (FLLLLLRLLA…WRLVDICFIQ (146 aa)) form the N-acetyltransferase domain. The Lumenal segment spans residues 84–232 (LRLLARQPWK…IQLNYSFPSA (149 aa)). Position 109 is an N6-acetyllysine (lysine 109).

This sequence belongs to the NAT8 family. Acetylation on Lys-109 modulates enzymatic activity. In terms of tissue distribution, expressed in brain (at protein level).

Its subcellular location is the endoplasmic reticulum-Golgi intermediate compartment membrane. The protein localises to the endoplasmic reticulum membrane. The catalysed reaction is L-lysyl-[protein] + acetyl-CoA = N(6)-acetyl-L-lysyl-[protein] + CoA + H(+). Endoplasmic reticulum (ER)-membrane-bound lysine N-acetyltransferase catalyzing the N6-acetylation of lysine residues in the lumen of the ER in various proteins, including PROM1 and BACE1, using acetyl-CoA as acetyl donor. Thereby, may regulate apoptosis through the acetylation and the regulation of the expression of PROM1. Acetylates and stabilizes BACE1 immature protein, leading to increased steady-state levels in neurons. By acting on BACE1 expression, may regulate amyloid beta-peptide formation. N(6)-lysine acetylation in ER maintains protein homeostasis and regulates reticulophagy. The protein is N-acetyltransferase 8B of Mus musculus (Mouse).